Reading from the N-terminus, the 584-residue chain is Dihydroxyacetone kinase 1 (584 aa).

Position 2 is an N-acetylserine (serine 2). Phosphoserine occurs at positions 2 and 5. The DhaK domain maps to 7–353; the sequence is EVTDPVNSSL…LNAFTNAPGW (347 aa). Residues 51 to 54, lysine 103, and aspartate 108 contribute to the substrate site; that span reads GSGH. Residue histidine 220 is the Tele-hemiaminal-histidine intermediate of the active site. Serine 365 bears the Phosphoserine mark. A DhaL domain is found at 386 to 582; it reads DKFAEWMKSG…LCEFLKGVQS (197 aa). ATP contacts are provided by residues 415-418 and 459-460; these read DGDC and TS. Serine 512 carries the post-translational modification Phosphoserine. Residues 514–515 and 567–569 each bind ATP; these read TM and DPG.

Belongs to the dihydroxyacetone kinase (DAK) family.

It carries out the reaction dihydroxyacetone + ATP = dihydroxyacetone phosphate + ADP + H(+). The catalysed reaction is D-glyceraldehyde + ATP = D-glyceraldehyde 3-phosphate + ADP + H(+). It functions in the pathway polyol metabolism; glycerol fermentation; glycerone phosphate from glycerol (oxidative route): step 2/2. Its function is as follows. Catalyzes both the phosphorylation of dihydroxyacetone and of glyceraldehyde. This is Dihydroxyacetone kinase 1 (DAK1) from Saccharomyces cerevisiae (strain ATCC 204508 / S288c) (Baker's yeast).